Reading from the N-terminus, the 199-residue chain is ATP-dependent Clp protease proteolytic subunit (199 aa).

Catalysis depends on Ser97, which acts as the Nucleophile. The active site involves His122.

The protein belongs to the peptidase S14 family. As to quaternary structure, fourteen ClpP subunits assemble into 2 heptameric rings which stack back to back to give a disk-like structure with a central cavity, resembling the structure of eukaryotic proteasomes.

It is found in the cytoplasm. It carries out the reaction Hydrolysis of proteins to small peptides in the presence of ATP and magnesium. alpha-casein is the usual test substrate. In the absence of ATP, only oligopeptides shorter than five residues are hydrolyzed (such as succinyl-Leu-Tyr-|-NHMec, and Leu-Tyr-Leu-|-Tyr-Trp, in which cleavage of the -Tyr-|-Leu- and -Tyr-|-Trp bonds also occurs).. Cleaves peptides in various proteins in a process that requires ATP hydrolysis. Has a chymotrypsin-like activity. Plays a major role in the degradation of misfolded proteins. This is ATP-dependent Clp protease proteolytic subunit from Geotalea uraniireducens (strain Rf4) (Geobacter uraniireducens).